The chain runs to 67 residues: Protein SlyX homolog (67 aa).

Belongs to the SlyX family.

This Mesorhizobium japonicum (strain LMG 29417 / CECT 9101 / MAFF 303099) (Mesorhizobium loti (strain MAFF 303099)) protein is Protein SlyX homolog.